A 352-amino-acid chain; its full sequence is tRNA pseudouridine synthase D (352 aa).

The Nucleophile role is filled by Asp81. The TRUD domain maps to 157–303 (GVPNYFGTQR…MDHERRILRL (147 aa)).

It belongs to the pseudouridine synthase TruD family.

It carries out the reaction uridine(13) in tRNA = pseudouridine(13) in tRNA. Functionally, responsible for synthesis of pseudouridine from uracil-13 in transfer RNAs. In Pseudomonas putida (strain GB-1), this protein is tRNA pseudouridine synthase D.